A 75-amino-acid polypeptide reads, in one-letter code: Beta-defensin 42 (75 aa).

Positions 1–21 (MNLRLSCLLFILVTSLPAGRC) are cleaved as a signal peptide. Intrachain disulfides connect cysteine 33–cysteine 60, cysteine 40–cysteine 54, and cysteine 44–cysteine 61.

Belongs to the beta-defensin family. In terms of tissue distribution, epididymis-specific, with highest levels in the initial segment and distal caput.

It is found in the secreted. Has bactericidal activity. May play a role in the antimicrobial protection of sperm and urogenital tract epithelia. In Mus musculus (Mouse), this protein is Beta-defensin 42.